The following is a 271-amino-acid chain: TIP41-like protein (271 aa).

An N6-acetyllysine modification is found at K106. An interaction with PPP2CA region spans residues 173–271; it reads RVMPSSFFLL…PVDSQSTPSE (99 aa). Phosphoserine is present on residues S265 and S270.

This sequence belongs to the TIP41 family. As to quaternary structure, interacts with PPP2CA. Interacts with PPP2CB, PPP4C and PPP6C. Interacts with IGBP1; the interaction is dependent on PPP2CA. Associates with a protein phosphatase 2A PP2A(C):IGBP1 complex. Interacts with PPP4C and PPP4R2.

It localises to the cytoplasm. May be a allosteric regulator of serine/threonine-protein phosphatase 2A (PP2A). Inhibits catalytic activity of the PP2A(D) core complex in vitro. The PP2A(C):TIPRL complex does not show phosphatase activity. Acts as a negative regulator of serine/threonine-protein phosphatase 4 probably by inhibiting the formation of the active PPP4C:PPP4R2 complex; the function is proposed to implicate it in DNA damage response by promoting H2AX phosphorylated on Ser-140 (gamma-H2AX). May play a role in the regulation of ATM/ATR signaling pathway controlling DNA replication and repair. In Mus musculus (Mouse), this protein is TIP41-like protein (Tiprl).